The following is a 351-amino-acid chain: Phosphate acetyltransferase (351 aa).

This sequence belongs to the phosphate acetyltransferase and butyryltransferase family.

It is found in the cytoplasm. The enzyme catalyses acetyl-CoA + phosphate = acetyl phosphate + CoA. It functions in the pathway metabolic intermediate biosynthesis; acetyl-CoA biosynthesis; acetyl-CoA from acetate: step 2/2. In Rickettsia prowazekii (strain Madrid E), this protein is Phosphate acetyltransferase (pta).